The following is a 1644-amino-acid chain: Terminal uridylyltransferase 4 (1644 aa).

Disordered regions lie at residues 31-63 (NQTL…QNDI), 96-168 (CKAK…SLLL), and 205-257 (ALQN…EMDY). Over residues 36–46 (ARNDKSVKEIE) the composition is skewed to basic and acidic residues. Ser-104 carries the phosphoserine modification. Over residues 112 to 125 (TISQAKSEKATSLQ) the composition is skewed to polar residues. Phosphoserine is present on residues Ser-134 and Ser-156. Polar residues predominate over residues 206–222 (LQNSPRSQKQQTCTDNT). The segment covering 238 to 252 (DLSKMKNDESNKENS) has biased composition (basic and acidic residues). Residues 253–333 (SEMDYLENAT…KEKRHKKNIL (81 aa)) are required for interaction with LIN28A and pre-let-7 RNA. Cys-306, Cys-309, His-322, and His-328 together coordinate Zn(2+). Residues 579-617 (EKNSIAEENKAKADQPKDDTKKTETDNQSNAMKEKHGKS) form a disordered region. Residues 582 to 603 (SIAEENKAKADQPKDDTKKTET) are compositionally biased toward basic and acidic residues. A PAP-associated 1 domain is found at 628 to 678 (SLGQLWLELLKFYTLDFALEEYVICVRIQDILTRENKNWPKRRIAIEDPFS). The interval 794-816 (GQDSSSLSTSKSSEIEPKLDKKQ) is disordered. The span at 806 to 816 (SEIEPKLDKKQ) shows a compositional bias: basic and acidic residues. The segment at 901-1634 (DKFILTSGKP…CATRRCRERC (734 aa)) is sufficient for monouridylation activity. The CCHC-type 1 zinc finger occupies 913 to 930 (IVCSICKKDGHSKNDCPE). Residues 998–1001 (SSKN), 1008–1011 (SDLD), Asn-1081, Lys-1103, 1121–1125 (SYAYI), and His-1237 each bind UTP. Mg(2+)-binding residues include Asp-1009 and Asp-1011. Residues 1184-1237 (SLGELWLGLLRFYTEEFDFKEYVISIRQKKLLTTFEKQWTSKCIAIEDPFDLNH) form the PAP-associated 2 domain. The segment at 1293–1310 (RCCRVCGKIGHYMKDCPK) adopts a CCHC-type 2 zinc-finger fold. A disordered region spans residues 1321 to 1348 (KDSEEEKEGNEEEKDSRDVLDPRDLHDT). Residues 1334 to 1348 (KDSRDVLDPRDLHDT) show a composition bias toward basic and acidic residues. The CCHC-type 3 zinc finger occupies 1357–1374 (LRCFICGDAGHVRRECPE). The segment covering 1401–1426 (AGSAQQQGDQSIRTRQSSECSESPSY) has biased composition (low complexity). Residues 1401-1482 (AGSAQQQGDQ…LYNFPQSPPA (82 aa)) form a disordered region. The segment covering 1441–1452 (AAITQPSSQPGS) has biased composition (polar residues). Positions 1453-1470 (QPKLGPPQQGAQPPHQVQ) are enriched in low complexity. The residue at position 1624 (Arg-1624) is an Omega-N-methylarginine.

It belongs to the DNA polymerase type-B-like family. As to quaternary structure, interacts with LIN28A in the presence of pre-let-7 RNA. Interacts with T2BP. Interacts with MOV10; the interaction is RNA-dependent. Mg(2+) is required as a cofactor. Requires Mn(2+) as cofactor.

Its subcellular location is the nucleus. It localises to the cytoplasm. The protein localises to the cytoplasmic ribonucleoprotein granule. The catalysed reaction is RNA(n) + UTP = RNA(n)-3'-uridine ribonucleotide + diphosphate. Uridylyltransferase that mediates the terminal uridylation of mRNAs with short (less than 25 nucleotides) poly(A) tails, hence facilitating global mRNA decay. Essential for both oocyte maturation and fertility. Through 3' terminal uridylation of mRNA, sculpts, with TUT7, the maternal transcriptome by eliminating transcripts during oocyte growth. Involved in microRNA (miRNA)-induced gene silencing through uridylation of deadenylated miRNA targets. Also functions as an integral regulator of microRNA biogenesis using 3 different uridylation mechanisms. Acts as a suppressor of miRNA biogenesis by mediating the terminal uridylation of some miRNA precursors, including that of let-7 (pre-let-7), miR107, miR-143 and miR-200c. Uridylated miRNAs are not processed by Dicer and undergo degradation. Degradation of pre-let-7 contributes to the maintenance of embryonic stem (ES) cell pluripotency. Also catalyzes the 3' uridylation of miR-26A, a miRNA that targets IL6 transcript. This abrogates the silencing of IL6 transcript, hence promoting cytokine expression. In the absence of LIN28A, TUT7 and TUT4 monouridylate group II pre-miRNAs, which includes most of pre-let7 members, that shapes an optimal 3' end overhang for efficient processing. Adds oligo-U tails to truncated pre-miRNAS with a 5' overhang which may promote rapid degradation of non-functional pre-miRNA species. May also suppress Toll-like receptor-induced NF-kappa-B activation via binding to T2BP. Does not play a role in replication-dependent histone mRNA degradation. Due to functional redundancy between TUT4 and TUT7, the identification of the specific role of each of these proteins is difficult. TUT4 and TUT7 restrict retrotransposition of long interspersed element-1 (LINE-1) in cooperation with MOV10 counteracting the RNA chaperonne activity of L1RE1. TUT7 uridylates LINE-1 mRNAs in the cytoplasm which inhibits initiation of reverse transcription once in the nucleus, whereas uridylation by TUT4 destabilizes mRNAs in cytoplasmic ribonucleoprotein granules. This chain is Terminal uridylyltransferase 4, found in Homo sapiens (Human).